Reading from the N-terminus, the 299-residue chain is Mitochondrial magnesium exporter 1 (299 aa).

Solcar repeat units lie at residues 12 to 103 (SNPV…GKRL), 112 to 200 (LTYP…LQEL), and 210 to 296 (ISTT…TNDL). The next 4 helical transmembrane spans lie at 79 to 99 (ISAPLVGVTPIYAVDFAVYAA), 114 to 134 (YPQIFAAGALAGVCSALVTVP), 216 to 236 (ILSGGTAGIVFWTLAVPFDVL), and 272 to 292 (ILPILLRAFPSTAAVFFGVEL).

Belongs to the mitochondrial carrier (TC 2.A.29) family.

The protein resides in the mitochondrion membrane. Mediates efflux of magnesium ions from mitochondria, suggesting a role in magnesium homeostasis. The polypeptide is Mitochondrial magnesium exporter 1 (Drosophila melanogaster (Fruit fly)).